The chain runs to 386 residues: Latent membrane protein 1 (386 aa).

At 1 to 23 (MEHDLERGPPGPRRPPRGPPLSS) the chain is on the cytoplasmic side. The helical transmembrane segment at 24 to 44 (SLGLALLLLLLALLFWLYIVM) threads the bilayer. The Extracellular portion of the chain corresponds to 45–51 (SDWTGGA). A helical transmembrane segment spans residues 52–72 (LLVLYSFALMLIIIILIIFIF). Topologically, residues 73–75 (RRD) are cytoplasmic. Residues 76–96 (LLCPLGALCILLLMITLLLIA) traverse the membrane as a helical segment. Topologically, residues 97-106 (LWNLHGQALF) are extracellular. A helical membrane pass occupies residues 107 to 127 (LGIVLFIFGCLLVLGIWIYLL). At 128 to 139 (EMLWRLGATIWQ) the chain is on the cytoplasmic side. The helical transmembrane segment at 140–160 (LLAFFLAFFLDLILLIIALYL) threads the bilayer. Over 161-163 (QQN) the chain is Extracellular. The chain crosses the membrane as a helical span at residues 164-184 (WWTLLVDLLWLLLFLAILIWM). Residues 185–386 (YYHGQRHSDE…HGPVQLSYYD (202 aa)) are Cytoplasmic-facing. The interval 194 to 232 (EHHHDDSLPHPQQATDDSGHESDSNSNEGRHHLLVSGAG) is CTAR1. The tract at residues 194-386 (EHHHDDSLPH…HGPVQLSYYD (193 aa)) is disordered. Positions 204–208 (PQQAT) match the Interaction with host TRAF proteins motif. Over residues 210 to 224 (DSGHESDSNSNEGRH) the composition is skewed to basic and acidic residues. Residues 251–267 (NGPQDPDNTDDNGPQDP) are compositionally biased toward low complexity. Residues 351–386 (GHGGGDPHLPTLLLGSSGSGGDDDDPHGPVQLSYYD) are CTAR2.

This sequence belongs to the herpesviridae LMP-1 family. Interacts (via PXQXT motif) with host tumor necrosis factor receptor-associated factor (TRAF) proteins TRAF1, TRAF2, TRAF3 and TRAF5. Interacts with human protein ZMYND11; leading to negatively regulate NF-kappa-B activation. Interacts with host UBE2I; this interaction induces the sumoylation of various cellular proteins. Interacts with host IRF7. Interacts with host TYK2. Ubiquitinated on the N-terminus.

It is found in the host cell membrane. Functionally, acts as a CD40 functional homolog to prevent apoptosis of infected B-lymphocytes and drive their proliferation. Functions as a constitutively active tumor necrosis factor receptor that induces the activation of several signaling pathways, including those of the NF-kappa-B family. LMP1 signaling leads to up-regulation of antiapoptotic proteins and provide growth signals in latently infected cells. Interacts with host UBE2I and subsequently affects the sumoylation state of several cellular proteins. For example, induces the sumoylation of host IRF7 thereby limiting its transcriptional activity and modulating the activation of innate immune responses. Also inhibits host IFN-alpha-stimulated STAT2 nuclear translocation and interferon-stimulated response element transcriptional activity by interacting with and inhibiting host TYK2. Induces SUMO expression during viral latency thereby dysregulating the host sumoylation processes. The polypeptide is Latent membrane protein 1 (LMP1) (Epstein-Barr virus (strain B95-8) (HHV-4)).